We begin with the raw amino-acid sequence, 320 residues long: tRNA uridine(34) hydroxylase (320 aa).

The Rhodanese domain maps to 123–217 (EDEDTVILDA…YGKDPETKGQ (95 aa)). Catalysis depends on Cys177, which acts as the Cysteine persulfide intermediate.

This sequence belongs to the TrhO family.

The catalysed reaction is uridine(34) in tRNA + AH2 + O2 = 5-hydroxyuridine(34) in tRNA + A + H2O. In terms of biological role, catalyzes oxygen-dependent 5-hydroxyuridine (ho5U) modification at position 34 in tRNAs. This chain is tRNA uridine(34) hydroxylase, found in Staphylococcus haemolyticus (strain JCSC1435).